A 471-amino-acid chain; its full sequence is MNPNQKIICISATGMTLSVVSLLIGIANLGLNIGLHYKVGDTPDVNTPNVNGTNSTTTTIINNNTQNNFTNITNIIHNKNEERTFLNLTKPLCEVNSWHILSKDNAIRIGEEAHILVTREPYLSCDPQGCRMFALSQGTTLRGRHANGTIHDRSPFRALVSWEMGQAPSPYNAKIECIGWSSTSCHDGISRMSICMSGPNNNASAVVWYGGRPVTEIPSWAGNILRTQESECVCHKGICPVVMTDGPANNKAATKIIYFKEGKIQKIEELTGNAQHIEECSCYGAKEVIKCICRDNWKGANRPVITIDPEMMTHTSKYLCSKILTDTSRPNDPTNGNCDAPITGGNPDPGVKGFAFLDGENSWLGRTISKDSRSGYEMLKVPNAETNTQSGPITHQVIVNNQNWSGYSGAFIDYWANKECFNPCFYVELIRGRPKESSVLWTSNSIVALCGSKERLGSWSWHDGAEIIYFK.

Over Met-1 to Lys-6 the chain is Intravirion. The helical transmembrane segment at Ile-7 to Ala-27 threads the bilayer. Positions Ser-11–Ile-33 are involved in apical transport and lipid raft association. The Virion surface segment spans residues Asn-28 to Lys-471. A hypervariable stalk region region spans residues His-36–Thr-89. 6 N-linked (GlcNAc...) asparagine; by host glycosylation sites follow: Asn-51, Asn-54, Asn-63, Asn-68, Asn-71, and Asn-87. Residues Leu-92 to Lys-471 form a head of neuraminidase region. Disulfide bonds link Cys-93-Cys-420, Cys-125-Cys-130, Cys-185-Cys-232, Cys-234-Cys-239, Cys-280-Cys-293, Cys-282-Cys-291, Cys-320-Cys-338, and Cys-424-Cys-450. Substrate is bound at residue Arg-119. N-linked (GlcNAc...) asparagine; by host glycosylation occurs at Asn-147. The active-site Proton donor/acceptor is the Asp-152. Arg-153 contacts substrate. Asn-202 carries an N-linked (GlcNAc...) asparagine; by host glycan. A substrate-binding site is contributed by Glu-278–Glu-279. Arg-294 is a binding site for substrate. Ca(2+) contacts are provided by Asp-295, Gly-299, and Asp-326. Position 373 (Arg-373) interacts with substrate. Residue Asn-403 is glycosylated (N-linked (GlcNAc...) asparagine; by host). The active-site Nucleophile is Tyr-407.

Belongs to the glycosyl hydrolase 34 family. Homotetramer. Ca(2+) is required as a cofactor. N-glycosylated.

It is found in the virion membrane. The protein resides in the host apical cell membrane. The catalysed reaction is Hydrolysis of alpha-(2-&gt;3)-, alpha-(2-&gt;6)-, alpha-(2-&gt;8)- glycosidic linkages of terminal sialic acid residues in oligosaccharides, glycoproteins, glycolipids, colominic acid and synthetic substrates.. Its activity is regulated as follows. Inhibited by the neuraminidase inhibitors zanamivir (Relenza) and oseltamivir (Tamiflu). These drugs interfere with the release of progeny virus from infected cells and are effective against all influenza strains. Resistance to neuraminidase inhibitors is quite rare. Catalyzes the removal of terminal sialic acid residues from viral and cellular glycoconjugates. Cleaves off the terminal sialic acids on the glycosylated HA during virus budding to facilitate virus release. Additionally helps virus spread through the circulation by further removing sialic acids from the cell surface. These cleavages prevent self-aggregation and ensure the efficient spread of the progeny virus from cell to cell. Otherwise, infection would be limited to one round of replication. Described as a receptor-destroying enzyme because it cleaves a terminal sialic acid from the cellular receptors. May facilitate viral invasion of the upper airways by cleaving the sialic acid moieties on the mucin of the airway epithelial cells. Likely to plays a role in the budding process through its association with lipid rafts during intracellular transport. May additionally display a raft-association independent effect on budding. Plays a role in the determination of host range restriction on replication and virulence. Sialidase activity in late endosome/lysosome traffic seems to enhance virus replication. The chain is Neuraminidase from Influenza A virus (strain A/Gull/Maryland/704/1977 H13N6).